A 751-amino-acid chain; its full sequence is Centrosomal protein of 68 kDa (751 aa).

Composition is skewed to basic and acidic residues over residues 1-17 (MALG…EDTK) and 86-96 (ASREPVAERSE). The disordered stretch occupies residues 1–253 (MALGEEKAEA…PQPVFSGGDA (253 aa)). Composition is skewed to polar residues over residues 131–144 (LPQT…TTIC) and 163–175 (APSS…SQWK). The segment covering 176-200 (SMPSPGSAAPQPSSCSVSASSTGSS) has biased composition (low complexity). Ser-326 carries the post-translational modification Phosphoserine. A compositionally biased stretch (polar residues) spans 339–348 (STLKSPTNVF). 3 disordered regions span residues 339 to 474 (STLK…ESDD), 511 to 545 (SPLE…SGDP), and 590 to 611 (RLDR…KGGE). 2 stretches are compositionally biased toward basic and acidic residues: residues 399-416 (GSRD…RGAK) and 433-450 (RTRD…EKRT). Positions 451–461 (SQSARRPTCTE) are enriched in polar residues. Ser-466 and Ser-472 each carry phosphoserine. The segment covering 520–537 (GPASLPSSSSQSQLPPGA) has biased composition (low complexity).

As to quaternary structure, interacts with CNTLN; the interaction recruits CEP68 to the centrosome. Interacts with the SCF(FBXW11) complex which contains SKP1, CUL1 and FBXW11; the interaction is probably mediated by FBXW11 and the complex also contains CDK5RAP2 and PCNT. Also interacts with F-box protein BTRC. Interacts with serine/threonine-protein kinase PLK1; the interaction leads to phosphorylation of CEP68 and its subsequent degradation. Interacts with NEK2; the interaction leads to phosphorylation of CEP68. In terms of processing, phosphorylation by PLK1 is required for binding to BTRC in prometaphase. Phosphorylated directly or indirectly by NEK2. NEK2-mediated phosphorylation promotes CEP68 dissociation from the centrosome and its degradation at the onset of mitosis. Post-translationally, ubiquitinated and targeted for proteasomal degradation in early mitosis by the SCF(BTRC) and/or SCF(FBXW11) E3 ubiquitin-protein ligase complexes. Degradation is complete by prometaphase and is required for removal of CDK5RAP2 from the peripheral pericentriolar material and subsequent centriole separation.

It localises to the cytoplasm. The protein resides in the cytoskeleton. Its subcellular location is the microtubule organizing center. It is found in the centrosome. In terms of biological role, involved in maintenance of centrosome cohesion, probably as part of a linker structure which prevents centrosome splitting. Required for localization of CDK5RAP2 to the centrosome during interphase. Contributes to CROCC/rootletin filament formation. The chain is Centrosomal protein of 68 kDa (CEP68) from Pongo abelii (Sumatran orangutan).